The primary structure comprises 154 residues: Myoglobin (154 aa).

The 147-residue stretch at G2–K148 folds into the Globin domain. S4 is modified (phosphoserine). H65 serves as a coordination point for nitrite. Residue H65 participates in O2 binding. Position 68 is a phosphothreonine (T68). A heme b-binding site is contributed by H94.

Belongs to the globin family. In terms of assembly, monomeric.

It is found in the cytoplasm. Its subcellular location is the sarcoplasm. The enzyme catalyses Fe(III)-heme b-[protein] + nitric oxide + H2O = Fe(II)-heme b-[protein] + nitrite + 2 H(+). It carries out the reaction H2O2 + AH2 = A + 2 H2O. Its function is as follows. Monomeric heme protein which primary function is to store oxygen and facilitate its diffusion within muscle tissues. Reversibly binds oxygen through a pentacoordinated heme iron and enables its timely and efficient release as needed during periods of heightened demand. Depending on the oxidative conditions of tissues and cells, and in addition to its ability to bind oxygen, it also has a nitrite reductase activity whereby it regulates the production of bioactive nitric oxide. Under stress conditions, like hypoxia and anoxia, it also protects cells against reactive oxygen species thanks to its pseudoperoxidase activity. This chain is Myoglobin (MB), found in Gorilla gorilla beringei (Mountain gorilla).